A 363-amino-acid chain; its full sequence is 3-dehydroquinate synthase (363 aa).

NAD(+) contacts are provided by residues 107-111 (GVIGD), 131-132 (TT), K144, and K153. Zn(2+) is bound by residues E186, H251, and H268.

The protein belongs to the sugar phosphate cyclases superfamily. Dehydroquinate synthase family. It depends on Co(2+) as a cofactor. Zn(2+) is required as a cofactor. NAD(+) serves as cofactor.

It is found in the cytoplasm. It carries out the reaction 7-phospho-2-dehydro-3-deoxy-D-arabino-heptonate = 3-dehydroquinate + phosphate. It participates in metabolic intermediate biosynthesis; chorismate biosynthesis; chorismate from D-erythrose 4-phosphate and phosphoenolpyruvate: step 2/7. Its function is as follows. Catalyzes the conversion of 3-deoxy-D-arabino-heptulosonate 7-phosphate (DAHP) to dehydroquinate (DHQ). The polypeptide is 3-dehydroquinate synthase (Nostoc punctiforme (strain ATCC 29133 / PCC 73102)).